The chain runs to 750 residues: Methylmalonyl-CoA mutase, mitochondrial (750 aa).

The N-terminal 32 residues, 1-32 (MLRVKNQLFLLSPHYLKQVKESSGSRLIRQRF), are a transit peptide targeting the mitochondrion. Position 50 (glutamine 50) interacts with malonyl-CoA. Lysine 89 is modified (N6-acetyllysine). Residues 96 to 99 (YPTM) and 106 to 110 (TIRQY) contribute to the malonyl-CoA site. At lysine 212 the chain carries N6-acetyllysine. Malonyl-CoA contacts are provided by residues 216-218 (TIQ), arginine 228, lysine 255, histidine 265, and 304-306 (RLS). Lysine 335 carries the post-translational modification N6-acetyllysine. Lysine 343 bears the N6-succinyllysine mark. Residue serine 481 is modified to Phosphoserine. An N6-succinyllysine modification is found at lysine 595. Lysine 602 carries the post-translational modification N6-acetyllysine. The B12-binding domain occupies 614-746 (RPRLLVAKMG…DDIEKCLEKK (133 aa)). Histidine 627 lines the adenosylcob(III)alamin pocket.

The protein belongs to the methylmalonyl-CoA mutase family. In terms of assembly, homodimer. Interacts (the apoenzyme form) with MMAA; the interaction is GTP dependent. Adenosylcob(III)alamin is required as a cofactor.

It is found in the mitochondrion matrix. The protein resides in the mitochondrion. Its subcellular location is the cytoplasm. The catalysed reaction is (R)-methylmalonyl-CoA = succinyl-CoA. Inhibited by itaconyl-CoA, a metabolite that inactivates the coenzyme B12 cofactor. Functionally, catalyzes the reversible isomerization of methylmalonyl-CoA (MMCoA) (generated from branched-chain amino acid metabolism and degradation of dietary odd chain fatty acids and cholesterol) to succinyl-CoA (3-carboxypropionyl-CoA), a key intermediate of the tricarboxylic acid cycle. The protein is Methylmalonyl-CoA mutase, mitochondrial (MMUT) of Macaca fascicularis (Crab-eating macaque).